A 580-amino-acid chain; its full sequence is RuBisCO large subunit-binding protein subunit alpha, chloroplastic (580 aa).

A compositionally biased stretch (polar residues) spans 1-17; the sequence is MAQSQLAKGSRQTTGRP. The disordered stretch occupies residues 1–24; sequence MAQSQLAKGSRQTTGRPFQNKPAR.

It belongs to the chaperonin (HSP60) family. As to quaternary structure, oligomer of probably six alpha and six beta subunits.

It localises to the plastid. Its subcellular location is the chloroplast. Its function is as follows. This protein binds RuBisCO small and large subunits and is implicated in the assembly of the enzyme oligomer. This Chlamydomonas reinhardtii (Chlamydomonas smithii) protein is RuBisCO large subunit-binding protein subunit alpha, chloroplastic.